The sequence spans 320 residues: Glucokinase (320 aa).

Residue 12 to 17 (GDIGGT) coordinates ATP.

This sequence belongs to the bacterial glucokinase family.

The protein resides in the cytoplasm. It catalyses the reaction D-glucose + ATP = D-glucose 6-phosphate + ADP + H(+). The sequence is that of Glucokinase from Nitrobacter hamburgensis (strain DSM 10229 / NCIMB 13809 / X14).